The following is a 120-amino-acid chain: Chaperonin GroEL (120 aa).

23 to 27 (DGTTT) contacts ATP.

It belongs to the chaperonin (HSP60) family. In terms of assembly, forms a cylinder of 14 subunits composed of two heptameric rings stacked back-to-back. Interacts with the co-chaperonin GroES.

Its subcellular location is the cytoplasm. It catalyses the reaction ATP + H2O + a folded polypeptide = ADP + phosphate + an unfolded polypeptide.. Functionally, together with its co-chaperonin GroES, plays an essential role in assisting protein folding. The GroEL-GroES system forms a nano-cage that allows encapsulation of the non-native substrate proteins and provides a physical environment optimized to promote and accelerate protein folding. The protein is Chaperonin GroEL of Mycobacterium shimoidei.